Reading from the N-terminus, the 477-residue chain is UDP-N-acetylglucosamine pyrophosphorylase (477 aa).

A Substrate binding motif is present at residues 109 to 112; sequence MAGG. UTP is bound by residues 109–112, Lys-123, and Gln-194; that span reads MAGG. Ser-218 carries the post-translational modification Phosphoserine. Gly-221 is a binding site for UTP. Substrate is bound at residue Asn-222. A UTP-binding site is contributed by Asp-252. The short motif at 302-303 is the Substrate binding element; it reads EY. Residue Lys-377 coordinates UTP. Lys-409 serves as a coordination point for substrate. The residue at position 461 (Ser-461) is a Phosphoserine.

Belongs to the UDPGP type 1 family.

It is found in the cytoplasm. The catalysed reaction is N-acetyl-alpha-D-glucosamine 1-phosphate + UTP + H(+) = UDP-N-acetyl-alpha-D-glucosamine + diphosphate. The protein operates within nucleotide-sugar biosynthesis; UDP-N-acetyl-alpha-D-glucosamine biosynthesis; UDP-N-acetyl-alpha-D-glucosamine from N-acetyl-alpha-D-glucosamine 1-phosphate: step 1/1. In terms of biological role, UDP-N-acetylglucosamine pyrophosphorylase that utilizes N-acetylglucosamine-1-phosphate as substrate. Together with AGM1, is involved in the production of UDP-N-acetylglucosamine from N-acetylglucosamine-6-phosphate. The protein is UDP-N-acetylglucosamine pyrophosphorylase (QRI1) of Saccharomyces cerevisiae (strain ATCC 204508 / S288c) (Baker's yeast).